We begin with the raw amino-acid sequence, 248 residues long: UPF0651 protein YPL107W, mitochondrial (248 aa).

Residues 1-26 (MIRNQGWSLLYRIYPVRRFTRYSRVD) constitute a mitochondrion transit peptide. The Oxidoreductase-like domain maps to 69 to 116 (KKIAGVQVPAKPQEPDNCCMSGCVNCVWEIYSEDLRDWKHRRKEAAEK).

Belongs to the UPF0651 family.

The protein resides in the mitochondrion. This is UPF0651 protein YPL107W, mitochondrial from Saccharomyces cerevisiae (strain ATCC 204508 / S288c) (Baker's yeast).